The sequence spans 193 residues: Frataxin, mitochondrial (193 aa).

A mitochondrion-targeting transit peptide spans Met1–Phe72.

It belongs to the frataxin family. Monomer. Oligomer.

Its subcellular location is the mitochondrion. The catalysed reaction is 4 Fe(2+) + O2 + 4 H(+) = 4 Fe(3+) + 2 H2O. In terms of biological role, promotes the biosynthesis of heme as well as the assembly and repair of iron-sulfur clusters by delivering Fe(2+) to proteins involved in these pathways. May play a role in the protection against iron-catalyzed oxidative stress through its ability to catalyze the oxidation of Fe(2+) to Fe(3+). May be able to store large amounts of the metal in the form of a ferrihydrite mineral by oligomerization. The chain is Frataxin, mitochondrial (fxn) from Dictyostelium discoideum (Social amoeba).